Here is a 285-residue protein sequence, read N- to C-terminus: Pantothenate synthetase (285 aa).

ATP is bound at residue 32–39 (MGALHDGH). His-39 serves as the catalytic Proton donor. Residue Gln-63 participates in (R)-pantoate binding. Gln-63 is a beta-alanine binding site. 149–152 (GEKD) serves as a coordination point for ATP. Gln-155 provides a ligand contact to (R)-pantoate. ATP contacts are provided by residues Val-178 and 186–189 (MSSR).

Belongs to the pantothenate synthetase family. Homodimer.

The protein resides in the cytoplasm. The enzyme catalyses (R)-pantoate + beta-alanine + ATP = (R)-pantothenate + AMP + diphosphate + H(+). It functions in the pathway cofactor biosynthesis; (R)-pantothenate biosynthesis; (R)-pantothenate from (R)-pantoate and beta-alanine: step 1/1. Functionally, catalyzes the condensation of pantoate with beta-alanine in an ATP-dependent reaction via a pantoyl-adenylate intermediate. The sequence is that of Pantothenate synthetase from Ruegeria pomeroyi (strain ATCC 700808 / DSM 15171 / DSS-3) (Silicibacter pomeroyi).